The chain runs to 109 residues: UPF0154 protein UPA3_0273 (109 aa).

A helical transmembrane segment spans residues 42–62; sequence VGLGIGIVLFLIAGLIIGYFI.

The protein belongs to the UPF0154 family.

The protein localises to the cell membrane. The sequence is that of UPF0154 protein UPA3_0273 from Ureaplasma parvum serovar 3 (strain ATCC 27815 / 27 / NCTC 11736).